The sequence spans 242 residues: Small ribosomal subunit protein uS2 (242 aa).

It belongs to the universal ribosomal protein uS2 family.

This Shewanella putrefaciens (strain CN-32 / ATCC BAA-453) protein is Small ribosomal subunit protein uS2.